The primary structure comprises 118 residues: Large ribosomal subunit protein bL19 (118 aa).

The protein belongs to the bacterial ribosomal protein bL19 family.

This protein is located at the 30S-50S ribosomal subunit interface and may play a role in the structure and function of the aminoacyl-tRNA binding site. The protein is Large ribosomal subunit protein bL19 of Helicobacter hepaticus (strain ATCC 51449 / 3B1).